Consider the following 199-residue polypeptide: NAD(P)H dehydrogenase (quinone) (199 aa).

The region spanning 4–190 is the Flavodoxin-like domain; that stretch reads MLVLYYSAYG…DGARFQGRRV (187 aa). FMN contacts are provided by residues 10–15 and 78–80; these read SAYGHM and TRY. Position 12 (Tyr-12) interacts with NAD(+). Trp-98 contacts substrate. Residues 113 to 119 and His-134 contribute to the FMN site; that span reads STATQYG. Positions 161 to 181 are disordered; sequence YGMTTTADGDGSRQPSAQELD. A compositionally biased stretch (polar residues) spans 163–177; it reads MTTTADGDGSRQPSA.

The protein belongs to the WrbA family. FMN serves as cofactor.

It carries out the reaction a quinone + NADH + H(+) = a quinol + NAD(+). The enzyme catalyses a quinone + NADPH + H(+) = a quinol + NADP(+). This chain is NAD(P)H dehydrogenase (quinone), found in Brucella canis (strain ATCC 23365 / NCTC 10854 / RM-666).